We begin with the raw amino-acid sequence, 912 residues long: MAAEKGGSSDEERKPLTRGSMEYRDSSNSLHYSSSAASLSLAVIDRINGSTHDTGPDEIGRGDRDYSDDGEYDLEEADYIPSGGKPVQKKVKIVLGFLLFLCLSGWSLAFVLFLFGGHESSKTSIVYEDNISDTGSQGIKITLDEVFDGTWSPNSRDISWIPGPNGEDGLLLEKGASISNGYLRVEDIVSRKDPKSSKKPIVLMQKAYFNVSGEAVFPSRVWPSPDLKTVLVLSNEEKNWRHSFTGKYWLFDVESQTGQPLDPAAKDQRVQLASWSPRSDAVVFTRDNNMFLRKLSSNEVIKITTNGGVNLFYGVPDWVYEEEVFSGNSVTWWADDGEYIAFLRTNESSVPEYPVQYFVSRPNGEIPKPGGESYPETRKIKYPKAGAPNPIVDLQFFDVGKDEVFSVDIKGDFADSNRLIIEVVWASNGKVIVRSTNRESDVLHVAVIDVLSRTGKIVRKEDINALDGGWVEPSQTTRFIPADPDNGRLNDGYIDTVIYEGRDQLAYYTPIDNPKPIVLTNGHSEVVQAPSGVDLKRGLVYFVVAGNEPWERHIYSVNFDGTSLQPVTNVSESSYYDVSFSNGAGYAFLKYAGPQVPWQKVISTPANEVTFEETIEENNHLSERLRQYTLESKIYQYIDIDGFSLPVLERRPPNFNQTKKYPVLFYLYGGPGSQTVKKKFNVDFQSYVAANLGYIVVTVDGRGTGFIGRKARCIIRGNLGHFESLDQIQAAKIWAAKPYVDESRISIWGWSYGGFMALKTIEQDGGRTFKYGIAVAPVTDWRYYDSIYTERYMHTPQRNPGGYDNAAISNTTALANNIRFLVMHGTADDNVHIQNSLTFIDKLDVNNVHNYDVHFFPDSDHSIYFHNAHKIVYSRLADWLVNAFNGEWLKTYDPTPNDSILRRAATWVGMSI.

Disordered stretches follow at residues 1–30 (MAAE…SNSL) and 48–68 (NGST…DYSD). The Cytoplasmic portion of the chain corresponds to 1–92 (MAAEKGGSSD…GGKPVQKKVK (92 aa)). Composition is skewed to basic and acidic residues over residues 7–25 (GSSD…EYRD) and 54–67 (TGPD…RDYS). A helical; Signal-anchor for type II membrane protein transmembrane segment spans residues 93-113 (IVLGFLLFLCLSGWSLAFVLF). Topologically, residues 114 to 912 (LFGGHESSKT…RAATWVGMSI (799 aa)) are vacuolar. Asparagine 130, asparagine 210, asparagine 346, asparagine 569, and asparagine 656 each carry an N-linked (GlcNAc...) asparagine glycan. The active-site Charge relay system is the serine 751. Asparagine 810 is a glycosylation site (N-linked (GlcNAc...) asparagine). Residues aspartate 828 and histidine 861 each act as charge relay system in the active site. The N-linked (GlcNAc...) asparagine glycan is linked to asparagine 897.

The protein belongs to the peptidase S9B family.

It is found in the vacuole membrane. The catalysed reaction is Release of an N-terminal dipeptide, Xaa-Yaa-|-Zaa-, from a polypeptide, preferentially when Yaa is Pro, provided Zaa is neither Pro nor hydroxyproline.. Functionally, type IV dipeptidyl-peptidase which removes N-terminal dipeptides sequentially from polypeptides having unsubstituted N-termini provided that the penultimate residue is proline. The polypeptide is Probable dipeptidyl-aminopeptidase B (DAPB) (Paracoccidioides brasiliensis (strain Pb18)).